The primary structure comprises 354 residues: Probable L-ascorbate-6-phosphate lactonase UlaG (354 aa).

The protein belongs to the UlaG family. A divalent metal cation is required as a cofactor.

It is found in the cytoplasm. It catalyses the reaction L-ascorbate 6-phosphate + H2O = 3-dehydro-L-gulonate 6-phosphate. It participates in cofactor degradation; L-ascorbate degradation; D-xylulose 5-phosphate from L-ascorbate: step 1/4. Functionally, probably catalyzes the hydrolysis of L-ascorbate-6-P into 3-keto-L-gulonate-6-P. Is essential for L-ascorbate utilization under anaerobic conditions. This chain is Probable L-ascorbate-6-phosphate lactonase UlaG, found in Salmonella agona (strain SL483).